The following is a 229-amino-acid chain: Thiamine-phosphate synthase (229 aa).

4-amino-2-methyl-5-(diphosphooxymethyl)pyrimidine is bound by residues 38-42 (QFREK) and Asn73. Residues Asp74 and Asp93 each coordinate Mg(2+). Ser111 contributes to the 4-amino-2-methyl-5-(diphosphooxymethyl)pyrimidine binding site. 137-139 (TLS) lines the 2-[(2R,5Z)-2-carboxy-4-methylthiazol-5(2H)-ylidene]ethyl phosphate pocket. Lys140 serves as a coordination point for 4-amino-2-methyl-5-(diphosphooxymethyl)pyrimidine. Residues Gly169 and 189–190 (IS) each bind 2-[(2R,5Z)-2-carboxy-4-methylthiazol-5(2H)-ylidene]ethyl phosphate.

The protein belongs to the thiamine-phosphate synthase family. The cofactor is Mg(2+).

The enzyme catalyses 2-[(2R,5Z)-2-carboxy-4-methylthiazol-5(2H)-ylidene]ethyl phosphate + 4-amino-2-methyl-5-(diphosphooxymethyl)pyrimidine + 2 H(+) = thiamine phosphate + CO2 + diphosphate. It carries out the reaction 2-(2-carboxy-4-methylthiazol-5-yl)ethyl phosphate + 4-amino-2-methyl-5-(diphosphooxymethyl)pyrimidine + 2 H(+) = thiamine phosphate + CO2 + diphosphate. It catalyses the reaction 4-methyl-5-(2-phosphooxyethyl)-thiazole + 4-amino-2-methyl-5-(diphosphooxymethyl)pyrimidine + H(+) = thiamine phosphate + diphosphate. It participates in cofactor biosynthesis; thiamine diphosphate biosynthesis; thiamine phosphate from 4-amino-2-methyl-5-diphosphomethylpyrimidine and 4-methyl-5-(2-phosphoethyl)-thiazole: step 1/1. In terms of biological role, condenses 4-methyl-5-(beta-hydroxyethyl)thiazole monophosphate (THZ-P) and 2-methyl-4-amino-5-hydroxymethyl pyrimidine pyrophosphate (HMP-PP) to form thiamine monophosphate (TMP). In Streptococcus suis (strain 98HAH33), this protein is Thiamine-phosphate synthase.